Consider the following 235-residue polypeptide: Claudin-15 (235 aa).

A topological domain (cytoplasmic) is located at residue M1. The chain crosses the membrane as a helical span at residues 2–24; it reads LVAVEIFGFFLTAVGLLMLGVTL. The Extracellular portion of the chain corresponds to 25 to 74; sequence AHSSWRVSTVHGNVITTNTIFENLWYSCATDSMGVHNCWEFPSMLALSGY. An intrachain disulfide couples C52 to C62. A helical transmembrane segment spans residues 75–99; it reads IQACRALMITAILLGFLGLFLGMVG. Topologically, residues 100–115 are cytoplasmic; that stretch reads LRCTNIGGLELSRKTK. Residue S111 is modified to Phosphoserine. Residues 116-140 form a helical membrane-spanning segment; the sequence is LAATAGALHILAGICGMVAVSWYAF. The Extracellular segment spans residues 141–159; sequence NITRDFFNPLYAGTKYELG. Positions 146-147 are important for the formation of tight-junction strand-like structures; the sequence is FF. The helical transmembrane segment at 160-182 threads the bilayer; the sequence is PALYLGWSACLLAILGGICLFSN. At 183 to 235 the chain is on the cytoplasmic side; the sequence is CCCSRDRDPATGVQLPYKAPVIPAASLAARLPAAASDEEGDSSFGKYGKNAYV. S218 and S225 each carry phosphoserine.

Belongs to the claudin family. In terms of assembly, can form homo- and heteropolymeric tight junction strands. Palmitoylated.

The protein resides in the cell junction. The protein localises to the tight junction. It localises to the cell membrane. It carries out the reaction Na(+)(in) = Na(+)(out). The enzyme catalyses K(+)(in) = K(+)(out). It catalyses the reaction Cs(+)(in) = Cs(+)(out). The catalysed reaction is Rb(+)(in) = Rb(+)(out). It carries out the reaction Li(+)(in) = Li(+)(out). The enzyme catalyses NH4(+)(in) = NH4(+)(out). It catalyses the reaction methylamine(out) = methylamine(in). The catalysed reaction is H2O(in) = H2O(out). In terms of biological role, forms paracellular channels: polymerizes in tight junction strands with cation- and water-selective channels through the strands, conveying epithelial permeability in a process known as paracellular tight junction permeability. In intestinal epithelium, allows for sodium and water fluxes from the peritoneal side to the lumen of the intestine to regulate nutrient absorption and intestinal morphogenesis. This Bos taurus (Bovine) protein is Claudin-15 (CLDN15).